The primary structure comprises 211 residues: Probable GTP-binding protein EngB (211 aa).

Residues 30–204 form the EngB-type G domain; it reads EGFEVAFAGR…YTVLADWMEL (175 aa). Residues 38–45, 64–68, 82–85, 149–152, and 182–185 each bind GTP; these read GRSNAGKS, GRTQL, DLPG, TKAD, and LFSA. Mg(2+)-binding residues include Ser-45 and Thr-66.

The protein belongs to the TRAFAC class TrmE-Era-EngA-EngB-Septin-like GTPase superfamily. EngB GTPase family. It depends on Mg(2+) as a cofactor.

Functionally, necessary for normal cell division and for the maintenance of normal septation. The polypeptide is Probable GTP-binding protein EngB (Pseudomonas savastanoi pv. phaseolicola (strain 1448A / Race 6) (Pseudomonas syringae pv. phaseolicola (strain 1448A / Race 6))).